The primary structure comprises 159 residues: Phosphopantetheine adenylyltransferase (159 aa).

Residue Thr10 participates in substrate binding. Residues 10–11 (TF) and His18 each bind ATP. Residues Lys42, Leu74, and Arg88 each contribute to the substrate site. Residues 89 to 91 (GLR), Glu99, and 124 to 130 (NSFISST) contribute to the ATP site.

The protein belongs to the bacterial CoaD family. In terms of assembly, homohexamer. It depends on Mg(2+) as a cofactor.

It localises to the cytoplasm. It carries out the reaction (R)-4'-phosphopantetheine + ATP + H(+) = 3'-dephospho-CoA + diphosphate. It participates in cofactor biosynthesis; coenzyme A biosynthesis; CoA from (R)-pantothenate: step 4/5. In terms of biological role, reversibly transfers an adenylyl group from ATP to 4'-phosphopantetheine, yielding dephospho-CoA (dPCoA) and pyrophosphate. The protein is Phosphopantetheine adenylyltransferase of Shewanella pealeana (strain ATCC 700345 / ANG-SQ1).